The chain runs to 241 residues: Tetraspanin-1 (241 aa).

Residues 1–11 (MQCFSFIKTMM) lie on the Cytoplasmic side of the membrane. Residues 12–32 (ILFNLLIFLCGAALLAVGIWV) form a helical membrane-spanning segment. Residues 33–52 (SIDGASFLKIFGPLSSSAMQ) are Extracellular-facing. The helical transmembrane segment at 53 to 73 (FVNVGYFLIAAGVVVFALGFL) threads the bilayer. Residues 74–88 (GCYGAKTESKCALVT) are Cytoplasmic-facing. A helical transmembrane segment spans residues 89 to 109 (FFFILLLIFIAEVAAAVVALV). Topologically, residues 110-211 (YTTMAEHFLT…NQLLYDIRTN (102 aa)) are extracellular. Asn-141, Asn-154, Asn-178, and Asn-184 each carry an N-linked (GlcNAc...) asparagine glycan. Residues 212–232 (AVTVGGVAAGIGGLELAAMIV) traverse the membrane as a helical segment. Over 233-241 (SMYLYCNLQ) the chain is Cytoplasmic.

Belongs to the tetraspanin (TM4SF) family. In terms of assembly, interacts with SLC19A2. Interacts with NTRK1/TRKA.

The protein resides in the cell membrane. It localises to the lysosome membrane. Functionally, structural component of specialized membrane microdomains known as tetraspanin-enriched microdomains (TERMs), which act as platforms for receptor clustering and signaling. Participates thereby in diverse biological functions such as cell signal transduction, adhesion, migration and protein trafficking. Regulates neuronal differentiation in response to NGF by facilitating NGF-mediated activation of NTRK1/TRKA receptor tyrosine kinase and subsequent downstream signaling pathways. Plays a role in the inhibition of TNFalpha-induced apoptosis. Mechanistically, inhibits the NF-kappa-B signaling pathway by blocking phosphorylation of CHUK. Also promotes the stability of the thiamine transporter 1/SLC19A2 in intestinal epithelial cells leading to an increase of thiamine uptake process. The chain is Tetraspanin-1 (TSPAN1) from Homo sapiens (Human).